A 235-amino-acid polypeptide reads, in one-letter code: Urease accessory protein UreF (235 aa).

The protein belongs to the UreF family. In terms of assembly, ureD, UreF and UreG form a complex that acts as a GTP-hydrolysis-dependent molecular chaperone, activating the urease apoprotein by helping to assemble the nickel containing metallocenter of UreC. The UreE protein probably delivers the nickel.

Its subcellular location is the cytoplasm. Required for maturation of urease via the functional incorporation of the urease nickel metallocenter. This chain is Urease accessory protein UreF, found in Ureaplasma urealyticum serovar 10 (strain ATCC 33699 / Western).